The following is a 208-amino-acid chain: Large ribosomal subunit protein uL4 (208 aa).

A disordered region spans residues 46 to 84; sequence QGTHKAKTRAEVRGGGRKPFRQKGTGNARQGSTRSPLMI. Polar residues predominate over residues 69-80; that stretch reads GTGNARQGSTRS.

Belongs to the universal ribosomal protein uL4 family. Part of the 50S ribosomal subunit.

Its function is as follows. One of the primary rRNA binding proteins, this protein initially binds near the 5'-end of the 23S rRNA. It is important during the early stages of 50S assembly. It makes multiple contacts with different domains of the 23S rRNA in the assembled 50S subunit and ribosome. In terms of biological role, forms part of the polypeptide exit tunnel. The protein is Large ribosomal subunit protein uL4 of Chlorobium limicola (strain DSM 245 / NBRC 103803 / 6330).